The primary structure comprises 284 residues: MPRYAQLVMGPAGSGKSTYCATMVQHCEALNRSVQVVNLDPAAEHFNYSVMADIRELIEVDDVMEDDSLRFGPNGGLVFCMEYFANNFDWLENCLGHVEDDYILFDCPGQIELYTHLPVMKQLVQQLEQWEFRVCGVFLVDSQFMVESFKFISGILAALSAMISLEIPQVNIMTKMDLLSKKAKKEIEKFLDPDMYSLLEDSTSDLRSKKFKKLTKAICGLIDDYSMVRFLPYDQSDEESMNIVLQHIDFAIQYGEDLEFKEPKEREDESSSMFDEYFQECQDE.

13-18 is a GTP binding site; the sequence is GSGKST. A Gly-Pro-Asn (GPN)-loop; involved in dimer interface motif is present at residues 72–74; the sequence is GPN. GTP is bound at residue 174 to 177; sequence TKMD.

It belongs to the GPN-loop GTPase family. Heterodimer with GPN1. Binds to RNA polymerase II (RNAPII). Interacts directly with subunits RPB4 and RPB7 and the CTD of RPB1.

Functionally, small GTPase required for proper localization of RNA polymerase II (RNAPII). May act at an RNAP assembly step prior to nuclear import. This Homo sapiens (Human) protein is GPN-loop GTPase 3.